We begin with the raw amino-acid sequence, 380 residues long: Acyl-coenzyme A diphosphatase SCS3 (380 aa).

Over 1-7 (MSSKWFN) the chain is Cytoplasmic. A helical membrane pass occupies residues 8-28 (AIHLLVCPLTVLVGYLMNAYG). Residues 29-43 (YGAALQATLNKDGLV) lie on the Lumenal side of the membrane. The chain crosses the membrane as a helical span at residues 44-64 (NAMLVKKGWFWTSLVGWWCII). The Cytoplasmic portion of the chain corresponds to 65–88 (RYRAVPGATGRDRRHIVQSFKRYA). A helical membrane pass occupies residues 89–109 (ILTVWWYVFTQGIWFGVGPIM). The Lumenal portion of the chain corresponds to 110–233 (DLVFVYTGGH…GHWAGGHDPS (124 aa)). Residues 234–254 (GHVFLATLMCMFLLGELRVFG) traverse the membrane as a helical segment. H235 is a catalytic residue. The Cytoplasmic segment spans residues 255–325 (RRALAHLYAQ…LTRCIACDHP (71 aa)). The chain crosses the membrane as a helical span at residues 326-346 (VIILLTLLVTWLWQLLLTAVA). Over 347–356 (SRFHTVREHM) the chain is Lumenal. The active site involves H350. A helical membrane pass occupies residues 357–377 (SGLLAAYIVTGLVYARDAAAL). Residues 378–380 (RPV) lie on the Cytoplasmic side of the membrane.

It belongs to the FIT family. Fungal FIT2B/SCS3 subfamily.

It localises to the endoplasmic reticulum membrane. The enzyme catalyses an acyl-CoA + H2O = an acyl-4'-phosphopantetheine + adenosine 3',5'-bisphosphate + 2 H(+). It catalyses the reaction (9Z)-octadecenoyl-CoA + H2O = S-(9Z-octadecenoyl)-4'-phosphopantetheine + adenosine 3',5'-bisphosphate + 2 H(+). The catalysed reaction is (5Z,8Z,11Z,14Z)-eicosatetraenoyl-CoA + H2O = S-(5Z,8Z,11Z,14Z-eicosatetraenoyl)-4'-phosphopantetheine + adenosine 3',5'-bisphosphate + 2 H(+). It carries out the reaction hexadecanoyl-CoA + H2O = S-hexadecanoyl-4'-phosphopantetheine + adenosine 3',5'-bisphosphate + 2 H(+). In terms of biological role, fatty acyl-coenzyme A (CoA) diphosphatase that hydrolyzes fatty acyl-CoA to yield acyl-4'-phosphopantetheine and adenosine 3',5'-bisphosphate. Preferentially hydrolyzes unsaturated long-chain acyl-CoA substrates in the endoplasmic reticulum (ER) lumen. This catalytic activity is required for maintaining ER structure and for lipid droplets (LDs) biogenesis, which are lipid storage organelles involved in maintaining lipid and energy homeostasis. May directly bind to diacylglycerol (DAGs) and triacylglycerol, which is also important for LD biogenesis. May support directional budding of nacent LDs from the ER into the cytosol by reducing DAG levels at sites of LD formation. May play a role in the regulation of cell morphology and cytoskeletal organization. Involved in phospholipid biosynthesis. In Saccharomyces cerevisiae (strain ATCC 204508 / S288c) (Baker's yeast), this protein is Acyl-coenzyme A diphosphatase SCS3.